Consider the following 323-residue polypeptide: tRNA-dihydrouridine(20/20a) synthase (323 aa).

FMN is bound by residues 14-16 (PML) and Gln66. The Proton donor role is filled by Cys96. Residues Lys135, His166, 206 to 208 (NGG), and 228 to 229 (GR) each bind FMN.

The protein belongs to the Dus family. DusA subfamily. It depends on FMN as a cofactor.

It carries out the reaction 5,6-dihydrouridine(20) in tRNA + NADP(+) = uridine(20) in tRNA + NADPH + H(+). The enzyme catalyses 5,6-dihydrouridine(20) in tRNA + NAD(+) = uridine(20) in tRNA + NADH + H(+). It catalyses the reaction 5,6-dihydrouridine(20a) in tRNA + NADP(+) = uridine(20a) in tRNA + NADPH + H(+). The catalysed reaction is 5,6-dihydrouridine(20a) in tRNA + NAD(+) = uridine(20a) in tRNA + NADH + H(+). Functionally, catalyzes the synthesis of 5,6-dihydrouridine (D), a modified base found in the D-loop of most tRNAs, via the reduction of the C5-C6 double bond in target uridines. Specifically modifies U20 and U20a in tRNAs. This is tRNA-dihydrouridine(20/20a) synthase from Haemophilus ducreyi (strain 35000HP / ATCC 700724).